Reading from the N-terminus, the 419-residue chain is eIF5-mimic protein 1 (419 aa).

Positions 1–22 (MNKHQKPVLTGQRFKTRKRDEK) are disordered. An N6-acetyllysine modification is found at K117. Residues 248-415 (VQQSLGTRKE…QNAEEESESE (168 aa)) enclose the W2 domain. S412 and S414 each carry phosphoserine.

The protein belongs to the BZW family. Interacts with EIF3E. Interacts with EIF2S2. Interacts with EIF3C.

The protein localises to the cytoplasm. In terms of biological role, translation initiation regulator which represses non-AUG initiated translation and repeat-associated non-AUG (RAN) initiated translation by acting as a competitive inhibitor of eukaryotic translation initiation factor 5 (EIF5) function. Increases the accuracy of translation initiation by impeding EIF5-dependent translation from non-AUG codons by competing with it for interaction with EIF2S2 within the 43S pre-initiation complex (PIC) in an EIF3C-binding dependent manner. In Homo sapiens (Human), this protein is eIF5-mimic protein 1 (BZW2).